The sequence spans 138 residues: Glia maturation factor (138 aa).

An ADF-H domain is found at 3–138 (DNQICDISNE…TEEWLKAKLK (136 aa)).

This sequence belongs to the actin-binding proteins ADF family. GMF subfamily. In ovaries, expressed in follicular epithelium, in polar cells, migrating border cells, and centripedal cells (at protein level).

It is found in the cell projection. Its subcellular location is the lamellipodium. The protein localises to the cytoplasm. The protein resides in the perinuclear region. It localises to the nucleus. It is found in the cell cortex. Its function is as follows. Inhibits Arp2/3-mediated actin nucleation. Together with flr, promotes Arp2/3-nucleated actin filament array disassembly. Promotes debranching. Regulates lamellipodial protrusion dynamics possibly by facilitating lamellipodial retraction. In egg chambers, enhances the retraction dynamics of cellular extensions in border cells and thus together with flr plays an important role in directional migration of border cell clusters. This is Glia maturation factor from Drosophila melanogaster (Fruit fly).